A 262-amino-acid polypeptide reads, in one-letter code: 2-aminoethylphosphonate dioxygenase (262 aa).

Lys108 contacts 2-oxoglutarate. Positions 118, 120, and 198 each coordinate Fe cation.

The protein belongs to the PhyH family. Fe(2+) serves as cofactor.

The enzyme catalyses (2-aminoethyl)phosphonate + 2-oxoglutarate + O2 = (1R)-(2-amino-1-hydroxyethyl)phosphonate + succinate + CO2. Activity is enhanced by ascorbate. In terms of biological role, involved in the degradation of the organophosphonate 2-aminoethylphosphonic acid (2-AEP). Catalyzes the hydroxylation of 2-aminoethylphosphonic acid to yield (2-amino-1-hydroxyethyl)phosphonic acid. The sequence is that of 2-aminoethylphosphonate dioxygenase from Uncultured bacterium HF130_AEPn_1.